The primary structure comprises 97 residues: HssA/B-like protein 47 (97 aa).

Residues 1-33 (MTLFSSISSISNPMTSSKSSIASFGSGTSMSSN) are disordered.

It belongs to the hssA/B family.

In Dictyostelium discoideum (Social amoeba), this protein is HssA/B-like protein 47 (hssl47).